The following is a 663-amino-acid chain: UvrABC system protein B (663 aa).

Residues 31 to 418 enclose the Helicase ATP-binding domain; sequence DNIEGGEKAQ…TDTVVEQIIR (388 aa). ATP is bound at residue 44-51; sequence GATGTGKT. The Beta-hairpin motif lies at 97–120; that stretch reads YYDYYQPEAYVPSSDTYIEKDSSV. Residues 435–601 form the Helicase C-terminal domain; that stretch reads QMDDLLGEIN…TIKKEIRDLI (167 aa). The UVR domain occupies 627-662; the sequence is QAEIKALQQQMQEAAELLDFELAAQIRDVILELKAI.

The protein belongs to the UvrB family. As to quaternary structure, forms a heterotetramer with UvrA during the search for lesions. Interacts with UvrC in an incision complex.

It localises to the cytoplasm. In terms of biological role, the UvrABC repair system catalyzes the recognition and processing of DNA lesions. A damage recognition complex composed of 2 UvrA and 2 UvrB subunits scans DNA for abnormalities. Upon binding of the UvrA(2)B(2) complex to a putative damaged site, the DNA wraps around one UvrB monomer. DNA wrap is dependent on ATP binding by UvrB and probably causes local melting of the DNA helix, facilitating insertion of UvrB beta-hairpin between the DNA strands. Then UvrB probes one DNA strand for the presence of a lesion. If a lesion is found the UvrA subunits dissociate and the UvrB-DNA preincision complex is formed. This complex is subsequently bound by UvrC and the second UvrB is released. If no lesion is found, the DNA wraps around the other UvrB subunit that will check the other stand for damage. This is UvrABC system protein B from Streptococcus agalactiae serotype III (strain NEM316).